Reading from the N-terminus, the 1286-residue chain is MAVISKVTYSLYDQKEINATDIIISHVKNDDDIGTVKDGRLGAMDGALCKTCGKTELECFGHWGKVSIYKTHIVKPEFISEIIRLLNHICIHCGLLRSREPYSNDINLKELSGHALRRLKDKILSKKKSCWNSECMQPYQKISFSKKKVCFVNKLDDINVPNSLIYQKLISIHEKFWPLLEIYQYPANLFYTDYFPIPPLIIRPAISFWIDSIPKETNELTYLLGMIVKNCNLNADEQVIQKAVIEYDDIKIISNNTTSINLSYITSGKNNMIRSYIVARRKDQTARSVIGPSTSITVNEVGMPAYIRNTLTEKIFVNAFTVNKVKQLLASNQVKFYFNKRLNQLTRIRQGKFIKNKIHLLPGDWVEVAVQEYTSIIFGRQPSLHRYNVIASSIRATEGDTIKISPGIANSQNADFDGDEEWMILEQNPKAVVEQSILMYPTTLLKHDIHGAPVYGSIQDEIVAAYSLFRIQDLCLDEVLNILGKYGREFDPKGKCKFSGKDIYTYLIGEKINYPGLLKDGEIIANDVDSNFVVAMRHLSLAGLLSDHKSNVEGINFIIKSSYVFKRYLSIYGFGVTFKDLRPNSTFTNKLEAINVEKIELIKEAYAKYLKDVRDGKIVPLSKALEADYVESMLSNLTNLNIREIEEHMRQTLIDNPDNNLLKMAKAGYKVNPTELMYILGTYGQQRIDGEPAETRVLGRVLPYYLPDSKDPEGRGYILNSLTKGLTGSQYYFSMLVARSQSTDIVCETSRTGTLARKIIKKMEDMVVDGYGQVVIGNTLIKYAANYTKILGSVCKPVDLIYPDESMTWYLEISALWNKIKQGFVYSQKQKLAKKTLAPFNFLVFVKPTTEDNAIKVKDLYDMIHNVIDDVREKYFFTVSNIDFMEYIFLTHLNPSRIRITKETAITIFEKFYEKLNYTLGGGTPIGIISAQVLSEKFTQQALSSFHTTEKSGAVKQKLGFNEFNNLTNLSKNKTEIITLVSDDISKLQSVKINFEFVCLGELNPNITLRKETDRYVVDIIVNRLYIKRAEITELVVEYMIERFISFSVIVKEWGMETFIEDEDNIRFTVYLNFVEPEELNLSKFMMVLPGAANKGKISKFKIPISDYTGYDDFNQTKKLNKMTVELMNLKELGSFDLENVNVYPGVWNTYDIFGIEAARGYLCEAMLNTYGEGFDYLYQPCDLLASLLCASYEPESVNKFKFGAASTLKRATFGDNKALLNAALHKKSEPINDNSSCHFFSKVPNIGTGYYKYFIDLGLLMRMERKLSDKISSQKIKEMEETEDF.

The protein belongs to the poxviridae DNA-directed RNA polymerase 147 kDa subunit family. The DNA-dependent RNA polymerase used for intermediate and late genes expression consists of eight subunits Rpo30/OPG66, Rpo7/OPG90, Rpo22/OPG103, Rpo147/OPG105, Rpo18/OPG119, Rpo19/OPG131, Rpo132/OPG151 and Rpo35/OPG156. The same holoenzyme, with the addition of the transcription-specificity factor OPG109, is used for early gene expression.

The protein localises to the virion. The enzyme catalyses RNA(n) + a ribonucleoside 5'-triphosphate = RNA(n+1) + diphosphate. In terms of biological role, part of the DNA-dependent RNA polymerase which catalyzes the transcription of viral DNA into RNA using the four ribonucleoside triphosphates as substrates. Responsible for the transcription of early, intermediate and late genes. DNA-dependent RNA polymerase associates with the early transcription factor (ETF), itself composed of OPG118 and OPG133, thereby allowing the early genes transcription. Late transcription, and probably also intermediate transcription, require newly synthesized RNA polymerase. This chain is DNA-directed RNA polymerase 147 kDa polypeptide (OPG105), found in Variola virus (isolate Human/India/Ind3/1967) (VARV).